The primary structure comprises 345 residues: Anthranilate phosphoribosyltransferase (345 aa).

5-phospho-alpha-D-ribose 1-diphosphate is bound by residues glycine 80, 83 to 84 (GD), threonine 88, 90 to 93 (NIST), 108 to 116 (KHGNRSVSS), and serine 120. Residue glycine 80 participates in anthranilate binding. Serine 92 provides a ligand contact to Mg(2+). Asparagine 111 contacts anthranilate. Arginine 166 serves as a coordination point for anthranilate. Residues aspartate 225 and glutamate 226 each contribute to the Mg(2+) site.

Belongs to the anthranilate phosphoribosyltransferase family. Homodimer. The cofactor is Mg(2+).

It catalyses the reaction N-(5-phospho-beta-D-ribosyl)anthranilate + diphosphate = 5-phospho-alpha-D-ribose 1-diphosphate + anthranilate. It functions in the pathway amino-acid biosynthesis; L-tryptophan biosynthesis; L-tryptophan from chorismate: step 2/5. In terms of biological role, catalyzes the transfer of the phosphoribosyl group of 5-phosphorylribose-1-pyrophosphate (PRPP) to anthranilate to yield N-(5'-phosphoribosyl)-anthranilate (PRA). This is Anthranilate phosphoribosyltransferase from Pelotomaculum thermopropionicum (strain DSM 13744 / JCM 10971 / SI).